The following is a 441-amino-acid chain: Serine carboxypeptidase-like 3 (441 aa).

Positions 1-30 are cleaved as a signal peptide; sequence MASNYVFSVLRSLLLLIHTVFLGQHHVSSA. Cystine bridges form between Cys-88–Cys-331, Cys-252–Cys-266, and Cys-290–Cys-297. Asn-109 is a glycosylation site (N-linked (GlcNAc...) asparagine). Ser-184 is a catalytic residue. Asn-350 carries an N-linked (GlcNAc...) asparagine glycan. Residue Asp-366 is part of the active site. Residue Asn-382 is glycosylated (N-linked (GlcNAc...) asparagine). His-419 is a catalytic residue.

It belongs to the peptidase S10 family. Expressed in roots.

The protein localises to the secreted. Functionally, probable carboxypeptidase. The sequence is that of Serine carboxypeptidase-like 3 (SCPL3) from Arabidopsis thaliana (Mouse-ear cress).